A 185-amino-acid chain; its full sequence is uncharacterized protein (185 aa).

Residues 1–29 form the signal peptide; the sequence is MKLFSRTSLVALGTAAAITLSGVTAPAFA. Residues 41–66 are disordered; the sequence is KTAEDNTPEAPGASTPLKLEQPGTIT.

Glycosylated; by Pmt.

It is found in the secreted. This is an uncharacterized protein from Corynebacterium glutamicum (strain ATCC 13032 / DSM 20300 / JCM 1318 / BCRC 11384 / CCUG 27702 / LMG 3730 / NBRC 12168 / NCIMB 10025 / NRRL B-2784 / 534).